The sequence spans 259 residues: uncharacterized protein (259 aa).

Belongs to the BtpA family.

This is an uncharacterized protein from Pyrococcus abyssi (strain GE5 / Orsay).